The sequence spans 484 residues: Polyamine oxidase 3 (484 aa).

Residues Glu-47, Arg-55, Val-236, and Glu-423 each coordinate FAD. The Microbody targeting signal motif lies at Ser-482–Leu-484.

It belongs to the flavin monoamine oxidase family. FAD is required as a cofactor. In terms of tissue distribution, widely expressed.

The protein localises to the peroxisome. The catalysed reaction is spermine + O2 + H2O = 3-aminopropanal + spermidine + H2O2. It catalyses the reaction N(1)-acetylspermine + O2 + H2O = 3-acetamidopropanal + spermidine + H2O2. It carries out the reaction norspermine + O2 + H2O = norspermidine + 3-aminopropanal + H2O2. The enzyme catalyses spermidine + O2 + H2O = 3-aminopropanal + putrescine + H2O2. The catalysed reaction is thermospermine + O2 + H2O = 3-aminopropanal + spermidine + H2O2. Its pathway is amine and polyamine degradation; spermine degradation. The protein operates within amine and polyamine degradation; spermidine degradation. Flavoenzyme involved in polyamine back-conversion. Catalyzes the oxidation of the secondary amino group of polyamines, such as spermine, spermidine and their acetyl derivatives. Substrate preference is spermidine &gt; norspermine &gt; thermospermine &gt; N(1)-acetylspermine &gt; spermine. No activity detected when putrescine is used as substrate. Plays an important role in the regulation of polyamine intracellular concentration. The protein is Polyamine oxidase 3 of Oryza sativa subsp. japonica (Rice).